The sequence spans 384 residues: Succinyl-diaminopimelate desuccinylase (384 aa).

Histidine 72 is a Zn(2+) binding site. Aspartate 74 is an active-site residue. Aspartate 105 is a binding site for Zn(2+). Glutamate 139 functions as the Proton acceptor in the catalytic mechanism. Zn(2+) contacts are provided by glutamate 140, glutamate 168, and histidine 355.

Belongs to the peptidase M20A family. DapE subfamily. As to quaternary structure, homodimer. Requires Zn(2+) as cofactor. Co(2+) serves as cofactor.

The enzyme catalyses N-succinyl-(2S,6S)-2,6-diaminopimelate + H2O = (2S,6S)-2,6-diaminopimelate + succinate. It participates in amino-acid biosynthesis; L-lysine biosynthesis via DAP pathway; LL-2,6-diaminopimelate from (S)-tetrahydrodipicolinate (succinylase route): step 3/3. In terms of biological role, catalyzes the hydrolysis of N-succinyl-L,L-diaminopimelic acid (SDAP), forming succinate and LL-2,6-diaminopimelate (DAP), an intermediate involved in the bacterial biosynthesis of lysine and meso-diaminopimelic acid, an essential component of bacterial cell walls. This Blochmanniella pennsylvanica (strain BPEN) protein is Succinyl-diaminopimelate desuccinylase.